The sequence spans 380 residues: Guanine nucleotide-binding protein alpha-1 subunit (380 aa).

The interval 1-25 (MGSSCSRSHSLSEAETTKNAKSADI) is disordered. A lipid anchor (N-myristoyl glycine) is attached at G2. Residue C5 is the site of S-palmitoyl cysteine attachment. Positions 10-25 (SLSEAETTKNAKSADI) are enriched in basic and acidic residues. In terms of domain architecture, G-alpha spans 38–380 (HIHKLLLLGA…ESMRRSREGT (343 aa)). Positions 41 to 54 (KLLLLGAGESGKST) are G1 motif. E49, S50, G51, K52, S53, T54, D163, L188, Y189, T194, G222, N288, K289, D291, and A356 together coordinate GTP. S53 provides a ligand contact to Mg(2+). The tract at residues 186–194 (DVLYARVRT) is G2 motif. T194 serves as a coordination point for Mg(2+). A G3 motif region spans residues 215–224 (YRLYDVGGQR). The segment at 284–291 (ILFLNKFD) is G4 motif. The tract at residues 354–359 (TTALDQ) is G5 motif.

The protein belongs to the G-alpha family. In terms of assembly, g proteins are composed of 3 units; alpha, beta and gamma. The alpha chain contains the guanine nucleotide binding site. Interacts with COLD1. The cofactor is Mg(2+).

Its subcellular location is the cell membrane. In terms of biological role, guanine nucleotide-binding proteins (G proteins) are involved as modulators or transducers in various transmembrane signaling systems. May function in a signal transduction pathway required for normal growth and development of internodes, leaves, panicles and seeds. Involved in gibberellin signal transduction. Involved in R gene-mediated disease resistance. Functions upstream of the small GTPase RAC1 in the early steps of signaling. Involved in brassinosteroid response. May not be a signaling molecule in BRI1-mediated perception or transduction. This Oryza sativa subsp. indica (Rice) protein is Guanine nucleotide-binding protein alpha-1 subunit (GPA1).